The sequence spans 323 residues: MFGEAGKTKFQIDLRQHLRDQNISDNLVHLICEIAEASKYVINAIRTGDLGVAGTSNLYGEEQLALDVLSDRIIRKRLQHSGVVCNIASEEMEEIFQVTSNPQGMFSVAYDPLDGSSLVDVNLAVGTIVGIYQGSDLLQPGRHMVGAMYILYGPRVSMVYSVGKGVYEFTMNQLMEFTLSREQIQMHPSGDIYSPGGLRKKYCEGNERFIRYLEAKGSKLRYSGGFVPDINQVLIKGKGVFMYPALTDSPNGKLRLLFELNPMAFLIEQAGGAATNGHMPILDIVPESLDQRCPIYLGCRDDVVKAAEFLNTPCKTPHEEPQP.

Mg(2+)-binding residues include E90, D111, L113, and D114. Residues 114–117, Y222, and K253 contribute to the substrate site; that span reads DGSS. E259 lines the Mg(2+) pocket.

It belongs to the FBPase class 1 family. Homotetramer. Mg(2+) is required as a cofactor.

It localises to the cytoplasm. The enzyme catalyses beta-D-fructose 1,6-bisphosphate + H2O = beta-D-fructose 6-phosphate + phosphate. Its pathway is carbohydrate biosynthesis; gluconeogenesis. This chain is Fructose-1,6-bisphosphatase class 1, found in Pelobacter propionicus (strain DSM 2379 / NBRC 103807 / OttBd1).